The primary structure comprises 308 residues: Cytochrome b (308 aa).

A run of 4 helical transmembrane segments spans residues 1–21 (FGSLLGICLMTQIITGLLMAM), 45–66 (WLIRNLHANGASMFFICIYLHI), 81–101 (WNTGVILLLTLMATAFVGYVL), and 146–166 (FFALHFLLPFMIAGLTFIHLT). 2 residues coordinate heme b: His-51 and His-65. Residues His-150 and His-164 each contribute to the heme b site. Residue His-169 participates in a ubiquinone binding. 3 helical membrane-spanning segments follow: residues 194–214 (TKDILGFLAMLVPLTALAMFS), 256–276 (LGGVLALAASVLILFLIPFLH), and 288–308 (LSQLLFWILVTNLLILTWVGS).

This sequence belongs to the cytochrome b family. In terms of assembly, the cytochrome bc1 complex contains 11 subunits: 3 respiratory subunits (MT-CYB, CYC1 and UQCRFS1), 2 core proteins (UQCRC1 and UQCRC2) and 6 low-molecular weight proteins (UQCRH/QCR6, UQCRB/QCR7, UQCRQ/QCR8, UQCR10/QCR9, UQCR11/QCR10 and a cleavage product of UQCRFS1). This cytochrome bc1 complex then forms a dimer. Heme b is required as a cofactor.

The protein localises to the mitochondrion inner membrane. Component of the ubiquinol-cytochrome c reductase complex (complex III or cytochrome b-c1 complex) that is part of the mitochondrial respiratory chain. The b-c1 complex mediates electron transfer from ubiquinol to cytochrome c. Contributes to the generation of a proton gradient across the mitochondrial membrane that is then used for ATP synthesis. The chain is Cytochrome b (MT-CYB) from Asthenes dorbignyi (Creamy-breasted canastero).